Here is a 347-residue protein sequence, read N- to C-terminus: MVRDSGACVSVALDAMGADLGPEVAIKGADLVLSGAVPCKHKVHLSIYGKESAVLPVLGKYKLVEKNSVFIDTPDAVLCDDRPSFALRHRRKSSMWCAIEDVKKGVVASAVSAGNTGALMAISRYLLGTLQGIDRPAIATVLPSRKGSFVALDLGANAECAPGLLFQFAIMGRAFARAVLGVEHPKVGLLNIGAEDTKGTYNIQEAFALMRDAKQDINFYGYVEAKEAFDGVADVVVADGFSGNIMLKTCEAVAGLTLHILKKEICSSLMGRAAMRILRSCYFKRTSGSALDVRSYNGAVLLGLNGIVVKSHGSADATAFAHAIKEAVCVISQGDMAKEMISEVSNG.

Belongs to the PlsX family. Homodimer. Probably interacts with PlsY.

The protein localises to the cytoplasm. The catalysed reaction is a fatty acyl-[ACP] + phosphate = an acyl phosphate + holo-[ACP]. The protein operates within lipid metabolism; phospholipid metabolism. In terms of biological role, catalyzes the reversible formation of acyl-phosphate (acyl-PO(4)) from acyl-[acyl-carrier-protein] (acyl-ACP). This enzyme utilizes acyl-ACP as fatty acyl donor, but not acyl-CoA. This chain is Phosphate acyltransferase, found in Anaplasma marginale (strain St. Maries).